Here is a 2291-residue protein sequence, read N- to C-terminus: Protein Ycf2 (2291 aa).

1645–1652 (GSIGTGRS) is a binding site for ATP.

The protein belongs to the Ycf2 family.

It is found in the plastid. Its subcellular location is the chloroplast stroma. Functionally, probable ATPase of unknown function. Its presence in a non-photosynthetic plant (Epifagus virginiana) and experiments in tobacco indicate that it has an essential function which is probably not related to photosynthesis. The sequence is that of Protein Ycf2 from Olimarabidopsis pumila (Dwarf rocket).